Consider the following 372-residue polypeptide: NAD(P)H-quinone oxidoreductase subunit 1 (372 aa).

Helical transmembrane passes span 27 to 47 (LLWI…GVLV), 97 to 117 (VLFT…WLIV), 128 to 148 (VGIG…GLLM), 166 to 186 (AAQS…IVMM), 204 to 224 (FLSW…ICAL), 266 to 286 (VLSA…PISI), 308 to 328 (SLGI…AILL), and 347 to 367 (FLLP…LAFP).

This sequence belongs to the complex I subunit 1 family. NDH-1 is composed of at least 11 different subunits.

It localises to the cellular thylakoid membrane. The enzyme catalyses a plastoquinone + NADH + (n+1) H(+)(in) = a plastoquinol + NAD(+) + n H(+)(out). It carries out the reaction a plastoquinone + NADPH + (n+1) H(+)(in) = a plastoquinol + NADP(+) + n H(+)(out). Functionally, NDH-1 shuttles electrons from an unknown electron donor, via FMN and iron-sulfur (Fe-S) centers, to quinones in the respiratory and/or the photosynthetic chain. The immediate electron acceptor for the enzyme in this species is believed to be plastoquinone. Couples the redox reaction to proton translocation, and thus conserves the redox energy in a proton gradient. This is NAD(P)H-quinone oxidoreductase subunit 1 from Prochlorococcus marinus (strain NATL2A).